Consider the following 79-residue polypeptide: Large ribosomal subunit protein uL29 (79 aa).

Belongs to the universal ribosomal protein uL29 family.

The sequence is that of Large ribosomal subunit protein uL29 from Gluconacetobacter diazotrophicus (strain ATCC 49037 / DSM 5601 / CCUG 37298 / CIP 103539 / LMG 7603 / PAl5).